Here is a 170-residue protein sequence, read N- to C-terminus: NADH-ubiquinone oxidoreductase chain 6 (170 aa).

5 helical membrane-spanning segments follow: residues 1-21, 26-46, 49-69, 86-106, and 138-158; these read MIYMVSVSMMVLVLGLVAVAS, FYAALGLVLAAGAGCLVIVSF, SFLSIVLFLIYLGGMLVVFAY, VVFYVLVYLIGVLVWYLFLGG, and WVIIVYWWVSIIINFVCGIWV.

This sequence belongs to the complex I subunit 6 family. In terms of assembly, core subunit of respiratory chain NADH dehydrogenase (Complex I) which is composed of 45 different subunits.

The protein resides in the mitochondrion inner membrane. It carries out the reaction a ubiquinone + NADH + 5 H(+)(in) = a ubiquinol + NAD(+) + 4 H(+)(out). In terms of biological role, core subunit of the mitochondrial membrane respiratory chain NADH dehydrogenase (Complex I) which catalyzes electron transfer from NADH through the respiratory chain, using ubiquinone as an electron acceptor. Essential for the catalytic activity and assembly of complex I. This Xenopus laevis (African clawed frog) protein is NADH-ubiquinone oxidoreductase chain 6 (mt-nd6).